The sequence spans 204 residues: LexA repressor (204 aa).

The segment at residues 28–48 (RAEIAQELGFKSPNAAEEHLK) is a DNA-binding region (H-T-H motif). Catalysis depends on for autocatalytic cleavage activity residues Ser-125 and Lys-162.

This sequence belongs to the peptidase S24 family. In terms of assembly, homodimer.

It catalyses the reaction Hydrolysis of Ala-|-Gly bond in repressor LexA.. Functionally, represses a number of genes involved in the response to DNA damage (SOS response), including recA and lexA. In the presence of single-stranded DNA, RecA interacts with LexA causing an autocatalytic cleavage which disrupts the DNA-binding part of LexA, leading to derepression of the SOS regulon and eventually DNA repair. The sequence is that of LexA repressor from Pseudomonas aeruginosa (strain LESB58).